Consider the following 476-residue polypeptide: Siroheme synthase (476 aa).

Residues 1 to 204 form a precorrin-2 dehydrogenase /sirohydrochlorin ferrochelatase region; the sequence is MDYFPVFLNI…GKDQAAQDYL (204 aa). NAD(+)-binding positions include 22–23 and 43–44; these read SV and PT. At S129 the chain carries Phosphoserine. The interval 218–476 is uroporphyrinogen-III C-methyltransferase; that stretch reads GEVYLVGAGP…GNTPGYSKHP (259 aa). P227 lines the S-adenosyl-L-methionine pocket. Catalysis depends on D250, which acts as the Proton acceptor. The active-site Proton donor is K272. S-adenosyl-L-methionine contacts are provided by residues 303-305, I308, 333-334, M385, and G414; these read GGD and TA.

The protein in the N-terminal section; belongs to the precorrin-2 dehydrogenase / sirohydrochlorin ferrochelatase family. It in the C-terminal section; belongs to the precorrin methyltransferase family.

The catalysed reaction is uroporphyrinogen III + 2 S-adenosyl-L-methionine = precorrin-2 + 2 S-adenosyl-L-homocysteine + H(+). It carries out the reaction precorrin-2 + NAD(+) = sirohydrochlorin + NADH + 2 H(+). The enzyme catalyses siroheme + 2 H(+) = sirohydrochlorin + Fe(2+). It participates in cofactor biosynthesis; adenosylcobalamin biosynthesis; precorrin-2 from uroporphyrinogen III: step 1/1. Its pathway is cofactor biosynthesis; adenosylcobalamin biosynthesis; sirohydrochlorin from precorrin-2: step 1/1. It functions in the pathway porphyrin-containing compound metabolism; siroheme biosynthesis; precorrin-2 from uroporphyrinogen III: step 1/1. The protein operates within porphyrin-containing compound metabolism; siroheme biosynthesis; siroheme from sirohydrochlorin: step 1/1. It participates in porphyrin-containing compound metabolism; siroheme biosynthesis; sirohydrochlorin from precorrin-2: step 1/1. In terms of biological role, multifunctional enzyme that catalyzes the SAM-dependent methylations of uroporphyrinogen III at position C-2 and C-7 to form precorrin-2 via precorrin-1. Then it catalyzes the NAD-dependent ring dehydrogenation of precorrin-2 to yield sirohydrochlorin. Finally, it catalyzes the ferrochelation of sirohydrochlorin to yield siroheme. This is Siroheme synthase from Nitrosomonas eutropha (strain DSM 101675 / C91 / Nm57).